Consider the following 369-residue polypeptide: Flagellar P-ring protein (369 aa).

Positions 1-22 are cleaved as a signal peptide; that stretch reads MFNARRLIAATLLMSCAFGAHA.

Belongs to the FlgI family. The basal body constitutes a major portion of the flagellar organelle and consists of four rings (L,P,S, and M) mounted on a central rod.

The protein resides in the periplasm. The protein localises to the bacterial flagellum basal body. Its function is as follows. Assembles around the rod to form the L-ring and probably protects the motor/basal body from shearing forces during rotation. This is Flagellar P-ring protein from Pseudomonas entomophila (strain L48).